Reading from the N-terminus, the 157-residue chain is NADPH-dependent 7-cyano-7-deazaguanine reductase (157 aa).

Cys55 serves as the catalytic Thioimide intermediate. The active-site Proton donor is the Asp62. Substrate contacts are provided by residues 77–79 and 96–97; these read VES and HE.

This sequence belongs to the GTP cyclohydrolase I family. QueF type 1 subfamily.

It localises to the cytoplasm. The enzyme catalyses 7-aminomethyl-7-carbaguanine + 2 NADP(+) = 7-cyano-7-deazaguanine + 2 NADPH + 3 H(+). It participates in tRNA modification; tRNA-queuosine biosynthesis. Catalyzes the NADPH-dependent reduction of 7-cyano-7-deazaguanine (preQ0) to 7-aminomethyl-7-deazaguanine (preQ1). The sequence is that of NADPH-dependent 7-cyano-7-deazaguanine reductase from Neisseria gonorrhoeae (strain ATCC 700825 / FA 1090).